We begin with the raw amino-acid sequence, 313 residues long: Jacalin-related lectin 8 (313 aa).

The N-terminal stretch at 1-23 (MFIIYLFIFLSSAIIDSNGVAMA) is a signal peptide. Jacalin-type lectin domains lie at 24–163 (QKIE…YVKT) and 165–309 (PTKS…YFSP).

The protein belongs to the jacalin lectin family.

The sequence is that of Jacalin-related lectin 8 (JAL8) from Arabidopsis thaliana (Mouse-ear cress).